The primary structure comprises 427 residues: Actin-related protein 3 (427 aa).

Belongs to the actin family. ARP3 subfamily. In terms of assembly, component of the Arp2/3 complex composed of arp2, act2, arc1/p41-ARC, arc2/p34-ARC, arc3/p21-ARC, arc4/p20-ARC and arc5/p16-ARC.

The protein localises to the cytoplasm. Its subcellular location is the cytoskeleton. It localises to the actin patch. Functionally, functions as ATP-binding component of the Arp2/3 complex which is involved in regulation of actin polymerization and together with an activating nucleation-promoting factor (NPF) mediates the formation of branched actin networks. Seems to contact the pointed end of the daughter actin filament. May be involved in cytokinesis. This Schizosaccharomyces pombe (strain 972 / ATCC 24843) (Fission yeast) protein is Actin-related protein 3 (act2).